Here is a 668-residue protein sequence, read N- to C-terminus: GTP-binding protein 1 (668 aa).

A disordered region spans residues 1-32 (MAAERSRSPVDSPVPASMFAPEPSSPGAARAA). Phosphoserine occurs at positions 6, 8, 12, 24, 25, 44, 47, and 69. The region spanning 158–389 (FLEVRVAVVG…LNLLSPRTSY (232 aa)) is the tr-type G domain. The tract at residues 167–174 (GNVDAGKS) is G1. 167 to 174 (GNVDAGKS) is a binding site for GTP. The tract at residues 206 to 210 (GRTSS) is G2. The tract at residues 252–255 (DLAG) is G3. Residues 252–256 (DLAGH) and 308–311 (TKID) each bind GTP. The segment at 308-311 (TKID) is G4. A G5 region spans residues 366-368 (SNV). Residues 573-595 (LLQTTNNSPMNSKPQQIKMQSTK) show a composition bias toward polar residues. The segment at 573–668 (LLQTTNNSPM…GACVTPASGC (96 aa)) is disordered. Ser-580 carries the phosphoserine modification. Residues 609–619 (GVPAAGGPPTG) show a composition bias toward low complexity. Residues 624–637 (SLGTAQAASTSGLQ) show a composition bias toward polar residues. The segment covering 646-657 (GRRRGGQRHKVK) has biased composition (basic residues).

This sequence belongs to the TRAFAC class translation factor GTPase superfamily. Classic translation factor GTPase family. GTPBP1 subfamily. Interacts with EXOSC2/RRP4, EXOSC3/RRP40, EXOSC5/RRP46, HNRNPD, HNRNPR and SYNCRIP. Identified in a complex with AANAT mRNA, but does not bind mRNA by itself. As to expression, detected in some neurons in the brain cortex. Detected in small arteries, dendritic cells and macrophages in the thymus. Detected in lung bronchi, in bronchial epithelial cells and in bronchial smooth muscle cells. Detected in smooth muscle cells in a broad range of organs (at protein level). Expressed in brain, thymus, lung, and kidney.

It is found in the cytoplasm. Its function is as follows. Promotes degradation of target mRNA species. Plays a role in the regulation of circadian mRNA stability. Binds GTP and has GTPase activity. This is GTP-binding protein 1 (Gtpbp1) from Mus musculus (Mouse).